The chain runs to 148 residues: Calmodulin-related protein 97A (148 aa).

EF-hand domains lie at 7 to 42 (EQIAEFKDAFVQFDKEGTGKIATRELGTLMRTLGQN), 43 to 78 (PTEAELQDLIAEAENNNNGQLNFTEFCGIMAKQMRE), 80 to 115 (DTEEEMREAFKIFDRDGDGFISPAELRFVMINLGEK), and 116 to 148 (VTDEEIDEMIREADFDGDGMINYEEFVWMISQK). Positions 20, 24, 26, 31, 58, 60, 62, 67, 93, 95, 97, 104, 129, 131, 133, 135, and 140 each coordinate Ca(2+).

This sequence belongs to the calmodulin family.

In terms of biological role, may be involved in calcium-mediated signal transduction. The polypeptide is Calmodulin-related protein 97A (Acam) (Drosophila melanogaster (Fruit fly)).